The sequence spans 443 residues: MARRAADKRVNLAVSRIIPPILIGVFGYASYAITKPLCVDYLIHPAHHYDRRSRSGAGAAILAIYYVLLIPVLATYLRLLYNVVLSPGYLPRGTACTQNQTGSDGSKHRHRRHRRRKSGHHLSKTTEKTDRSDGGDVERGLEYSARAKAYPLDAEGLESFYTKDVFVCQPDGRPVYCSTCCQFKTDRAHHCREVDRCVRKMDHFCPWVGGVVSETSFKFFIQFIVYTMIYCIFVLIVFAIYTAELRREAGRTNVHWIVCLALSSLFGFFTFGVAISSVQLAANNLTTIENLNRRSAVWTLAIRVPRHILSKRWAPTFRTITYPLPPVPPAESEVARESPGGEQHVFAILQTLPGENPFDLGSPLKNIQQVMGFSLLEWLLPIKQSPCADHSSNESAFALGPVVTRLKKEAGLEVSTESESADPVGAAETPQHEQRRGKHRRRN.

2 helical membrane passes run 17 to 37 and 57 to 77; these read IIPPILIGVFGYASYAITKPL and AGAAILAIYYVLLIPVLATYL. Residues 96–137 are disordered; sequence CTQNQTGSDGSKHRHRRHRRRKSGHHLSKTTEKTDRSDGGDV. The span at 107-123 shows a compositional bias: basic residues; the sequence is KHRHRRHRRRKSGHHLS. Residues 124–137 are compositionally biased toward basic and acidic residues; that stretch reads KTTEKTDRSDGGDV. One can recognise a DHHC domain in the interval 175–225; sequence VYCSTCCQFKTDRAHHCREVDRCVRKMDHFCPWVGGVVSETSFKFFIQFIV. Transmembrane regions (helical) follow at residues 220-240 and 256-276; these read FIQFIVYTMIYCIFVLIVFAI and WIVCLALSSLFGFFTFGVAIS. The tract at residues 410-443 is disordered; the sequence is AGLEVSTESESADPVGAAETPQHEQRRGKHRRRN.

Belongs to the DHHC palmitoyltransferase family. PFA5 subfamily. Autopalmitoylated.

It is found in the membrane. The enzyme catalyses L-cysteinyl-[protein] + hexadecanoyl-CoA = S-hexadecanoyl-L-cysteinyl-[protein] + CoA. In Aspergillus fumigatus (strain ATCC MYA-4609 / CBS 101355 / FGSC A1100 / Af293) (Neosartorya fumigata), this protein is Palmitoyltransferase pfa5 (pfa5).